Reading from the N-terminus, the 338-residue chain is Anthranilate phosphoribosyltransferase (338 aa).

5-phospho-alpha-D-ribose 1-diphosphate contacts are provided by residues Gly-78, 81-82 (GD), Ser-86, 88-91 (NIST), 106-114 (KHGNRSITS), and Ser-118. Position 78 (Gly-78) interacts with anthranilate. Mg(2+) is bound at residue Ser-90. An anthranilate-binding site is contributed by Asn-109. Arg-163 provides a ligand contact to anthranilate. Mg(2+) contacts are provided by Asp-222 and Glu-223.

The protein belongs to the anthranilate phosphoribosyltransferase family. As to quaternary structure, homodimer. Mg(2+) is required as a cofactor.

It carries out the reaction N-(5-phospho-beta-D-ribosyl)anthranilate + diphosphate = 5-phospho-alpha-D-ribose 1-diphosphate + anthranilate. The protein operates within amino-acid biosynthesis; L-tryptophan biosynthesis; L-tryptophan from chorismate: step 2/5. In terms of biological role, catalyzes the transfer of the phosphoribosyl group of 5-phosphorylribose-1-pyrophosphate (PRPP) to anthranilate to yield N-(5'-phosphoribosyl)-anthranilate (PRA). In Staphylococcus haemolyticus (strain JCSC1435), this protein is Anthranilate phosphoribosyltransferase.